The following is a 602-amino-acid chain: Elongation factor 4 (602 aa).

Residues 7-189 (SRIRNFCIIA…AVVDRVPAPA (183 aa)) enclose the tr-type G domain. Residues 19-24 (DHGKST) and 136-139 (NKID) each bind GTP.

Belongs to the TRAFAC class translation factor GTPase superfamily. Classic translation factor GTPase family. LepA subfamily.

The protein localises to the cell inner membrane. The catalysed reaction is GTP + H2O = GDP + phosphate + H(+). In terms of biological role, required for accurate and efficient protein synthesis under certain stress conditions. May act as a fidelity factor of the translation reaction, by catalyzing a one-codon backward translocation of tRNAs on improperly translocated ribosomes. Back-translocation proceeds from a post-translocation (POST) complex to a pre-translocation (PRE) complex, thus giving elongation factor G a second chance to translocate the tRNAs correctly. Binds to ribosomes in a GTP-dependent manner. The sequence is that of Elongation factor 4 from Synechococcus sp. (strain CC9902).